Reading from the N-terminus, the 103-residue chain is N(4)-acetylcytidine amidohydrolase (103 aa).

In terms of domain architecture, ASCH spans 6 to 101 (ITFFQRFQDD…QTQFYVIEFK (96 aa)). The Proton acceptor role is filled by Lys21. The active-site Nucleophile is Thr24. Residue Glu74 is the Proton donor of the active site.

This sequence belongs to the N(4)-acetylcytidine amidohydrolase family.

It catalyses the reaction N(4)-acetylcytidine + H2O = cytidine + acetate + H(+). It carries out the reaction N(4)-acetyl-2'-deoxycytidine + H2O = 2'-deoxycytidine + acetate + H(+). The catalysed reaction is N(4)-acetylcytosine + H2O = cytosine + acetate + H(+). In terms of biological role, catalyzes the hydrolysis of N(4)-acetylcytidine (ac4C). The protein is N(4)-acetylcytidine amidohydrolase (yqfB) of Escherichia coli O81 (strain ED1a).